The chain runs to 492 residues: N-succinylglutamate 5-semialdehyde dehydrogenase (492 aa).

Residue 220–225 (GSASTG) participates in NAD(+) binding. Residues Glu243 and Cys277 contribute to the active site.

It belongs to the aldehyde dehydrogenase family. AstD subfamily.

It carries out the reaction N-succinyl-L-glutamate 5-semialdehyde + NAD(+) + H2O = N-succinyl-L-glutamate + NADH + 2 H(+). Its pathway is amino-acid degradation; L-arginine degradation via AST pathway; L-glutamate and succinate from L-arginine: step 4/5. Its function is as follows. Catalyzes the NAD-dependent reduction of succinylglutamate semialdehyde into succinylglutamate. The chain is N-succinylglutamate 5-semialdehyde dehydrogenase from Salmonella paratyphi C (strain RKS4594).